A 135-amino-acid polypeptide reads, in one-letter code: L-ectoine synthase (135 aa).

The protein belongs to the ectoine synthase family.

It carries out the reaction (2S)-4-acetamido-2-aminobutanoate = L-ectoine + H2O. It participates in amine and polyamine biosynthesis; ectoine biosynthesis; L-ectoine from L-aspartate 4-semialdehyde: step 3/3. Catalyzes the circularization of gamma-N-acetyl-alpha,gamma-diaminobutyric acid (ADABA) to ectoine (1,4,5,6-tetrahydro-2-methyl-4-pyrimidine carboxylic acid), which is an excellent osmoprotectant. This Hyphomonas neptunium (strain ATCC 15444) protein is L-ectoine synthase.